Reading from the N-terminus, the 103-residue chain is Cystatin-A (103 aa).

M1 carries the N-acetylmethionine modification. The short motif at 52 to 56 (QVVAG) is the Secondary area of contact element.

Belongs to the cystatin family.

It is found in the cytoplasm. This is an intracellular thiol proteinase inhibitor. In Rattus norvegicus (Rat), this protein is Cystatin-A (Csta).